The primary structure comprises 783 residues: Rho GTPase-activating protein gacR (783 aa).

Residues 138 to 188 (AKNRFDKARLSFDEASEQFKQLRKKQNNINNEKLLEAEEDLDYATQQFSDI) are a coiled coil. Residues 262-299 (QFEQTNSSRTISLPPPPPPKPTSSTPSSSPSPSPSSSI) are disordered. The segment covering 283–299 (TSSTPSSSPSPSPSSSI) has biased composition (low complexity). Positions 319 to 509 (MALSTITERE…FIISNFNNIF (191 aa)) constitute a Rho-GAP domain. The segment covering 527–539 (GSSGGGGGGGSSG) has biased composition (gly residues). The disordered stretch occupies residues 527 to 745 (GSSGGGGGGG…TTNSRPLSNS (219 aa)). Composition is skewed to low complexity over residues 568–589 (SVNTSSSQSSSSSSSSSFASSA), 599–630 (PSSSSSPIITTTSPNSNTNINSNTSVNTNINP), 641–651 (PKKISSSSNSL), and 661–698 (SIPEKSQNNITPTILSSSLSAPTSPTTTTTTNPLRSST). The span at 706 to 738 (NRVSMYLQNSNTGVPLPSQKPQRVISNNNTTTN) shows a compositional bias: polar residues.

Its subcellular location is the cytoplasm. Its function is as follows. Rho GTPase-activating protein involved in the signal transduction pathway. This is Rho GTPase-activating protein gacR (gacR) from Dictyostelium discoideum (Social amoeba).